A 297-amino-acid polypeptide reads, in one-letter code: Cytidine deaminase (297 aa).

CMP/dCMP-type deaminase domains follow at residues 54–174 and 192–297; these read SSVE…FGPK and LRGD…YIEV. Residue 95-97 participates in substrate binding; that stretch reads NQE. Residue His108 coordinates Zn(2+). Glu110 functions as the Proton donor in the catalytic mechanism. Residues Cys135 and Cys138 each coordinate Zn(2+).

The protein belongs to the cytidine and deoxycytidylate deaminase family. As to quaternary structure, homodimer. Zn(2+) is required as a cofactor.

The catalysed reaction is cytidine + H2O + H(+) = uridine + NH4(+). It catalyses the reaction 2'-deoxycytidine + H2O + H(+) = 2'-deoxyuridine + NH4(+). Its function is as follows. This enzyme scavenges exogenous and endogenous cytidine and 2'-deoxycytidine for UMP synthesis. This is Cytidine deaminase from Actinobacillus pleuropneumoniae serotype 5b (strain L20).